The following is a 786-amino-acid chain: DNA ligase (786 aa).

Residues 32–36 (DAEYD), 81–82 (SL), and Glu121 each bind NAD(+). The active-site N6-AMP-lysine intermediate is Lys123. The NAD(+) site is built by Arg144, Glu181, Lys297, and Lys321. Zn(2+) is bound by residues Cys415, Cys418, Cys445, and Cys451. In terms of domain architecture, BRCT spans 703 to 786 (AEGLPLAGQT…EQLKSYGIEA (84 aa)).

The protein belongs to the NAD-dependent DNA ligase family. LigA subfamily. The cofactor is Mg(2+). Mn(2+) serves as cofactor.

The enzyme catalyses NAD(+) + (deoxyribonucleotide)n-3'-hydroxyl + 5'-phospho-(deoxyribonucleotide)m = (deoxyribonucleotide)n+m + AMP + beta-nicotinamide D-nucleotide.. Its function is as follows. DNA ligase that catalyzes the formation of phosphodiester linkages between 5'-phosphoryl and 3'-hydroxyl groups in double-stranded DNA using NAD as a coenzyme and as the energy source for the reaction. It is essential for DNA replication and repair of damaged DNA. The chain is DNA ligase from Ectopseudomonas mendocina (strain ymp) (Pseudomonas mendocina).